The chain runs to 254 residues: Citrate synthase-lysine N-methyltransferase CSKMT, mitochondrial (254 aa).

Residues 1–45 (MLLNRFLVPLRSLQKLTQARRWHQTSLINDLVVNMDKKAMWDRFY) constitute a mitochondrion transit peptide.

The protein belongs to the methyltransferase superfamily.

Its subcellular location is the mitochondrion. It carries out the reaction L-lysyl-[citrate synthase] + S-adenosyl-L-methionine = N(6)-methyl-L-lysyl-[citrate synthase] + S-adenosyl-L-homocysteine + H(+). It catalyses the reaction N(6)-methyl-L-lysyl-[citrate synthase] + S-adenosyl-L-methionine = N(6),N(6)-dimethyl-L-lysyl-[citrate synthase] + S-adenosyl-L-homocysteine + H(+). The catalysed reaction is N(6),N(6)-dimethyl-L-lysyl-[citrate synthase] + S-adenosyl-L-methionine = N(6),N(6),N(6)-trimethyl-L-lysyl-[citrate synthase] + S-adenosyl-L-homocysteine + H(+). Its activity is regulated as follows. Citrate synthase-lysine methyltransferase activity is inhibited by S-adenosylhomocysteine (AdoHcy) and oxaloacetate (OAA). In terms of biological role, protein-lysine methyltransferase that selectively trimethylates citrate synthase (CS) in mitochondria. Seems to conduct trimethylation in a highly distributive manner rather than in a processive manner, and thus introduces a single methyl group per binding event. This is Citrate synthase-lysine N-methyltransferase CSKMT, mitochondrial from Danio rerio (Zebrafish).